A 181-amino-acid chain; its full sequence is Oligoribonuclease (181 aa).

Residues 8-171 (LIWIDLEMTG…QDIQESIAEL (164 aa)) form the Exonuclease domain. Residue Y129 is part of the active site.

Belongs to the oligoribonuclease family.

It localises to the cytoplasm. 3'-to-5' exoribonuclease specific for small oligoribonucleotides. This is Oligoribonuclease from Shewanella sp. (strain MR-4).